A 412-amino-acid chain; its full sequence is Serine hydroxymethyltransferase (412 aa).

(6S)-5,6,7,8-tetrahydrofolate-binding positions include Leu117 and 121 to 123 (GHL). Position 226 is an N6-(pyridoxal phosphate)lysine (Lys226). (6S)-5,6,7,8-tetrahydrofolate is bound at residue 349-351 (SPF).

Belongs to the SHMT family. As to quaternary structure, homodimer. It depends on pyridoxal 5'-phosphate as a cofactor.

It localises to the cytoplasm. The catalysed reaction is (6R)-5,10-methylene-5,6,7,8-tetrahydrofolate + glycine + H2O = (6S)-5,6,7,8-tetrahydrofolate + L-serine. It participates in one-carbon metabolism; tetrahydrofolate interconversion. The protein operates within amino-acid biosynthesis; glycine biosynthesis; glycine from L-serine: step 1/1. Its function is as follows. Catalyzes the reversible interconversion of serine and glycine with tetrahydrofolate (THF) serving as the one-carbon carrier. This reaction serves as the major source of one-carbon groups required for the biosynthesis of purines, thymidylate, methionine, and other important biomolecules. Also exhibits THF-independent aldolase activity toward beta-hydroxyamino acids, producing glycine and aldehydes, via a retro-aldol mechanism. This Halothermothrix orenii (strain H 168 / OCM 544 / DSM 9562) protein is Serine hydroxymethyltransferase.